We begin with the raw amino-acid sequence, 201 residues long: MANKGPSYGMSREVQSKIEKKYDEELEERLVEWIIVQCGPDVGRPDRGRLGFQVWLKNGVILSKLVNSLYPDGSKPVKVPENPPSMVFKQMEQVAQFLKAAEDYGVIKTDMFQTVDLFEGKDMAAVQRTLMALGSLAVTKNDGHYRGDPNWFMKKAQEHKREFTESQLQEGKHVIGLQMGSNRGASQAGMTGYGRPRQIIS.

An N-acetylalanine modification is found at Ala2. The region spanning 24-137 (EELEERLVEW…RTLMALGSLA (114 aa)) is the Calponin-homology (CH) domain. At Ser166 the chain carries Phosphoserine. An N6-acetyllysine modification is found at Lys172. One copy of the Calponin-like repeat lies at 175-200 (IGLQMGSNRGASQAGMTGYGRPRQII). Residue Ser181 is modified to Phosphoserine. Omega-N-methylarginine is present on Arg183.

This sequence belongs to the calponin family.

It localises to the cytoplasm. In terms of biological role, actin cross-linking/gelling protein. Involved in calcium interactions and contractile properties of the cell that may contribute to replicative senescence. The protein is Transgelin (TAGLN) of Homo sapiens (Human).